The primary structure comprises 126 residues: Acyl carrier protein 2, mitochondrial (126 aa).

A mitochondrion-targeting transit peptide spans 1–36 (MAARGAMLRYLRVNVNPTIQNPRECVLPFSILLRRF). Positions 48–123 (SEVTDRVLSV…LAVDFIASHP (76 aa)) constitute a Carrier domain. Ser83 is modified (O-(pantetheine 4'-phosphoryl)serine).

The protein belongs to the acyl carrier protein (ACP) family. Complex I is composed of at least 49 different subunits. In terms of processing, 4'-phosphopantetheine is transferred from CoA to a specific serine of the apo-ACP-like protein.

It is found in the mitochondrion. It functions in the pathway lipid metabolism; fatty acid biosynthesis. In terms of biological role, carrier of the growing fatty acid chain in fatty acid biosynthesis. May be involved in the synthesis of short and medium chain fatty acids. Accessory and non-catalytic subunit of the mitochondrial membrane respiratory chain NADH dehydrogenase (Complex I), which functions in the transfer of electrons from NADH to the respiratory chain. This is Acyl carrier protein 2, mitochondrial (MTACP2) from Arabidopsis thaliana (Mouse-ear cress).